The following is a 502-amino-acid chain: Histidine--tRNA ligase (502 aa).

This sequence belongs to the class-II aminoacyl-tRNA synthetase family. In terms of assembly, homodimer.

It localises to the cytoplasm. The enzyme catalyses tRNA(His) + L-histidine + ATP = L-histidyl-tRNA(His) + AMP + diphosphate + H(+). The chain is Histidine--tRNA ligase from Brucella ovis (strain ATCC 25840 / 63/290 / NCTC 10512).